The following is a 199-amino-acid chain: ATP-dependent Clp protease proteolytic subunit (199 aa).

Catalysis depends on S99, which acts as the Nucleophile. H124 is a catalytic residue.

Belongs to the peptidase S14 family. In terms of assembly, fourteen ClpP subunits assemble into 2 heptameric rings which stack back to back to give a disk-like structure with a central cavity, resembling the structure of eukaryotic proteasomes.

The protein localises to the cytoplasm. It catalyses the reaction Hydrolysis of proteins to small peptides in the presence of ATP and magnesium. alpha-casein is the usual test substrate. In the absence of ATP, only oligopeptides shorter than five residues are hydrolyzed (such as succinyl-Leu-Tyr-|-NHMec, and Leu-Tyr-Leu-|-Tyr-Trp, in which cleavage of the -Tyr-|-Leu- and -Tyr-|-Trp bonds also occurs).. Its function is as follows. Cleaves peptides in various proteins in a process that requires ATP hydrolysis. Has a chymotrypsin-like activity. Plays a major role in the degradation of misfolded proteins. This is ATP-dependent Clp protease proteolytic subunit from Moorella thermoacetica (strain ATCC 39073 / JCM 9320).